The following is a 39-amino-acid chain: B melanoma antigen 4 (39 aa).

An N-terminal signal peptide occupies residues 1-17; it reads MAAGAVFLALSAQLLQA.

The protein belongs to the BAGE family. In terms of tissue distribution, not expressed in normal tissues except in testis. Expressed in melanoma, bladder and lung carcinomas.

The protein resides in the secreted. In terms of biological role, unknown. Candidate gene encoding tumor antigens. The protein is B melanoma antigen 4 (BAGE4) of Homo sapiens (Human).